The sequence spans 244 residues: MNKNYKNNLNESINNPSKILNEKIILGLDEAGRGPVLGPMVISVVKVTEKDLDKINSLDLKDSKQLTKKRREEYYNIINECFEVQKIVLAPEKIDEYMKTSNLNKIELSAFSKLSNHFLKEYENVKIFIDACSSSEQSFLNQFKAKLINKKVEIIAEHKADEKYKIVSAASIIAKVTRDNIIESYKEEFGDIGSGYPGDPKTKEFLKRFVKEHKKLPKIARGSWATSKKLLKEFEESKLHKWVK.

Positions 23–236 constitute an RNase H type-2 domain; the sequence is KIILGLDEAG…SKKLLKEFEE (214 aa). Positions 29, 30, and 130 each coordinate a divalent metal cation.

The protein belongs to the RNase HII family. Requires Mn(2+) as cofactor. Mg(2+) serves as cofactor.

It is found in the cytoplasm. It catalyses the reaction Endonucleolytic cleavage to 5'-phosphomonoester.. In terms of biological role, endonuclease that specifically degrades the RNA of RNA-DNA hybrids. The protein is Ribonuclease HII of Methanococcus vannielii (strain ATCC 35089 / DSM 1224 / JCM 13029 / OCM 148 / SB).